The chain runs to 146 residues: Hemoglobin subunit beta (146 aa).

The Globin domain occupies 2–146 (HWTAEEKQLI…VAHALARKYH (145 aa)). Residues histidine 63 and histidine 92 each coordinate heme b.

This sequence belongs to the globin family. In terms of assembly, heterotetramer of two alpha chains and two beta chains. As to expression, red blood cells.

In terms of biological role, involved in oxygen transport from the lung to the various peripheral tissues. The polypeptide is Hemoglobin subunit beta (HBB) (Phalacrocorax carbo (Great cormorant)).